Reading from the N-terminus, the 163-residue chain is Nucleotide-binding protein Tery_2743 (163 aa).

Belongs to the YajQ family.

In terms of biological role, nucleotide-binding protein. This is Nucleotide-binding protein Tery_2743 from Trichodesmium erythraeum (strain IMS101).